The sequence spans 323 residues: tRNA-modifying protein YgfZ (323 aa).

The folate site is built by Trp-29 and Trp-182.

Belongs to the tRNA-modifying YgfZ family.

The protein localises to the cytoplasm. Folate-binding protein involved in regulating the level of ATP-DnaA and in the modification of some tRNAs. It is probably a key factor in regulatory networks that act via tRNA modification, such as initiation of chromosomal replication. The sequence is that of tRNA-modifying protein YgfZ from Vibrio atlanticus (strain LGP32) (Vibrio splendidus (strain Mel32)).